The chain runs to 156 residues: Histone acetyltransferase HPA2 (156 aa).

The N-acetyltransferase domain maps to 9–156; sequence ITVRFVTEND…PKILYKRKGY (148 aa). 93–106 is an acetyl-CoA binding site; that stretch reads LYVDENSRVKGAGG.

This sequence belongs to the acetyltransferase family. GNAT subfamily. In terms of assembly, forms homodimers in the absence, and homotetramers in the presence of acetyl-CoA. Autoacetylates in an intermolecular reaction.

It catalyses the reaction L-lysyl-[protein] + acetyl-CoA = N(6)-acetyl-L-lysyl-[protein] + CoA + H(+). N-acetyltransferase that acetylates histone H3 at 'Lys-14' and histone H4 at 'Lys-5' and 'Lys-12'. Also acetylates polyamines like putrescine, spermidine and spermine, and certain other small basic proteins like nuclear HMG proteins. This is Histone acetyltransferase HPA2 from Saccharomyces cerevisiae (strain ATCC 204508 / S288c) (Baker's yeast).